Reading from the N-terminus, the 344-residue chain is Glyceraldehyde-3-phosphate dehydrogenase (344 aa).

NAD(+) contacts are provided by residues 11–12 (TI) and glycine 110. Position 139–141 (139–141 (SCN)) interacts with D-glyceraldehyde 3-phosphate. Cysteine 140 (nucleophile) is an active-site residue. Residue arginine 169 coordinates NAD(+). 195–196 (HG) contributes to the D-glyceraldehyde 3-phosphate binding site. NAD(+) is bound at residue glutamine 302.

It belongs to the glyceraldehyde-3-phosphate dehydrogenase family. Homotetramer.

It is found in the cytoplasm. It catalyses the reaction D-glyceraldehyde 3-phosphate + phosphate + NADP(+) = (2R)-3-phospho-glyceroyl phosphate + NADPH + H(+). The enzyme catalyses D-glyceraldehyde 3-phosphate + phosphate + NAD(+) = (2R)-3-phospho-glyceroyl phosphate + NADH + H(+). It functions in the pathway carbohydrate degradation; glycolysis; pyruvate from D-glyceraldehyde 3-phosphate: step 1/5. The polypeptide is Glyceraldehyde-3-phosphate dehydrogenase (Pyrobaculum islandicum (strain DSM 4184 / JCM 9189 / GEO3)).